Reading from the N-terminus, the 137-residue chain is Small ribosomal subunit protein eS6 (137 aa).

Residues 114–127 show a composition bias toward acidic residues; that stretch reads LPVEEAPAEDAPES. The disordered stretch occupies residues 114 to 137; that stretch reads LPVEEAPAEDAPESAEEKSEDKKE. Over residues 128–137 the composition is skewed to basic and acidic residues; it reads AEEKSEDKKE.

This sequence belongs to the eukaryotic ribosomal protein eS6 family.

This chain is Small ribosomal subunit protein eS6, found in Nitrosopumilus maritimus (strain SCM1).